The sequence spans 522 residues: Bifunctional purine biosynthesis protein PurH (522 aa).

Positions Met-1–Val-143 constitute an MGS-like domain.

The protein belongs to the PurH family.

It catalyses the reaction (6R)-10-formyltetrahydrofolate + 5-amino-1-(5-phospho-beta-D-ribosyl)imidazole-4-carboxamide = 5-formamido-1-(5-phospho-D-ribosyl)imidazole-4-carboxamide + (6S)-5,6,7,8-tetrahydrofolate. It carries out the reaction IMP + H2O = 5-formamido-1-(5-phospho-D-ribosyl)imidazole-4-carboxamide. It participates in purine metabolism; IMP biosynthesis via de novo pathway; 5-formamido-1-(5-phospho-D-ribosyl)imidazole-4-carboxamide from 5-amino-1-(5-phospho-D-ribosyl)imidazole-4-carboxamide (10-formyl THF route): step 1/1. The protein operates within purine metabolism; IMP biosynthesis via de novo pathway; IMP from 5-formamido-1-(5-phospho-D-ribosyl)imidazole-4-carboxamide: step 1/1. The sequence is that of Bifunctional purine biosynthesis protein PurH from Sorangium cellulosum (strain So ce56) (Polyangium cellulosum (strain So ce56)).